Here is a 229-residue protein sequence, read N- to C-terminus: 2-phytyl-1,4-naphtoquinone methyltransferase (229 aa).

This sequence belongs to the class I-like SAM-binding methyltransferase superfamily. MenG/UbiE family.

It carries out the reaction demethylphylloquinol + S-adenosyl-L-methionine = phylloquinol + S-adenosyl-L-homocysteine + H(+). It participates in cofactor biosynthesis; phylloquinone biosynthesis. Functionally, methyltransferase required for the conversion of 2-phytyl-1,4-beta-naphthoquinol to phylloquinol. This Nostoc sp. (strain PCC 7120 / SAG 25.82 / UTEX 2576) protein is 2-phytyl-1,4-naphtoquinone methyltransferase.